The sequence spans 436 residues: GTPase Der (436 aa).

EngA-type G domains are found at residues 3–168 (PLVA…EEKS) and 177–352 (IRLA…EQRS). GTP is bound by residues 9–16 (GRPNVGKS), 56–60 (DTGGY), 120–123 (NKVE), 183–190 (GRPNVGKS), 230–234 (DTAGL), and 295–298 (NKWD). The 84-residue stretch at 353 to 436 (QQITTSDLNR…VPFSLRFMQK (84 aa)) folds into the KH-like domain.

It belongs to the TRAFAC class TrmE-Era-EngA-EngB-Septin-like GTPase superfamily. EngA (Der) GTPase family. As to quaternary structure, associates with the 50S ribosomal subunit.

GTPase that plays an essential role in the late steps of ribosome biogenesis. This chain is GTPase Der, found in Prosthecochloris aestuarii (strain DSM 271 / SK 413).